A 218-amino-acid polypeptide reads, in one-letter code: uncharacterized protein (218 aa).

A chloroplast-targeting transit peptide spans 1-28 (MLSLQCLPPFFISVPNRSTNSCSTAPLR).

It belongs to the SixA phosphatase family.

The protein localises to the plastid. Its subcellular location is the chloroplast. This is an uncharacterized protein from Arabidopsis thaliana (Mouse-ear cress).